Consider the following 300-residue polypeptide: Tumor necrosis factor receptor superfamily member 6B (300 aa).

Residues 1–29 form the signal peptide; the sequence is MRALEGPGLSLLCLVLALPALLPVPAVRG. TNFR-Cys repeat units lie at residues 31-70, 72-113, 115-150, and 152-193; these read AETP…PTTC, PCPP…NRAC, CRTG…NTQC, and PCPP…DTLC. Intrachain disulfides connect cysteine 49–cysteine 62, cysteine 52–cysteine 70, cysteine 73–cysteine 88, cysteine 91–cysteine 105, cysteine 95–cysteine 113, cysteine 115–cysteine 126, cysteine 132–cysteine 150, and cysteine 153–cysteine 168. Asparagine 173 carries an N-linked (GlcNAc...) asparagine glycan. Cysteines 174 and 193 form a disulfide.

As to expression, detected in fetal lung, brain and liver. Detected in adult stomach, spinal cord, lymph node, trachea, spleen, colon and lung. Highly expressed in several primary tumors from colon, stomach, rectum, esophagus and in SW480 colon carcinoma cells.

Its subcellular location is the secreted. Decoy receptor that can neutralize the cytotoxic ligands TNFS14/LIGHT, TNFSF15 and TNFSF6/FASL. Protects against apoptosis. This is Tumor necrosis factor receptor superfamily member 6B (TNFRSF6B) from Homo sapiens (Human).